We begin with the raw amino-acid sequence, 161 residues long: Cell division control protein 31 (161 aa).

EF-hand domains follow at residues 20–55 (EQKQ…LGFE), 56–91 (LPKR…KILK), 93–128 (DPLD…LGET), and 129–161 (LTDE…CTDS). 4 residues coordinate Ca(2+): D33, N35, D37, and E44. Position 130 is a phosphothreonine (T130). D142, D144, D146, E148, and E153 together coordinate Ca(2+).

Belongs to the centrin family. In terms of assembly, component of the spindle pole body (SPB), acting as the connector of microtubule arrays in the cytoplasm and the nucleoplasm, is involved in nuclear positioning before chromosome segregation, SPB separation, spindle formation, chromosome segregation, nuclear migration into the bud, nuclear reorientation after cytokinesis and nuclear fusion during conjugation. The SPB half-bridge, which is tightly associated with the cytoplasmic side of the nuclear envelope and the SPB, is playing a key role as the starting structure for and in the initiation of SPB duplication in G1. At the SPB half-bridge CDC31 interacts with KAR1, MPS3 and SFI1. Interacts with KIC1. Interacts with VPS13. Associates with nuclear pore complexes (NPCs).

Its subcellular location is the nucleus envelope. The protein resides in the cytoplasm. It is found in the cytoskeleton. It localises to the microtubule organizing center. The protein localises to the spindle pole body. In terms of biological role, functions as a component of the spindle pole body (SPB) half-bridge. At the SPB, it is recruited by KAR1 and MPS3 to the SPB half-bridge and involved in the initial steps of SPB duplication. Also involved in connection with the protein kinase KIC1 in the maintenance of cell morphology and integrity. May play a role in vesicle-mediated transport, in a VPS13-dependent manner. This is Cell division control protein 31 (CDC31) from Saccharomyces cerevisiae (strain ATCC 204508 / S288c) (Baker's yeast).